Consider the following 308-residue polypeptide: MASSHNVLMRLVASAYSIAQKAGTIVRCVIAEGDLGIVQKTSATDLQTKADRMVQMSICSSLSRKFPKLTIIGEEDLPPGEVDQELIEDGQSEEILKQPCPSQYSAIKEEDLVVWVDPVDGTKEYTEGLLDNVTVLIGIAYEGKAIAGIINQPYYNYQAGPDAVLGRTIWGVLGLGAFGFQLKEAPAGKHIITTTRSHSNKLVTDCIAAMNPDNVLRVGGAGNKIIQLIEGKASAYVFASPGCKKWDTCAPEVILHAVGGKLTDIHGNPLQYDKEVKHMNSAGVLAALRNYEYYASRVPESVKSALIP.

Alanine 2 is subject to N-acetylalanine. The Proton acceptor role is filled by aspartate 51. Glutamate 74, aspartate 117, valine 119, and aspartate 120 together coordinate Mg(2+). Threonine 122 acts as the Proton acceptor in catalysis. Threonine 122 is subject to Phosphothreonine. Residues threonine 195, histidine 198, glycine 220, and lysine 224 each coordinate AMP. Serine 240 carries the phosphoserine modification. Lysine 244 is subject to N6-succinyllysine. Residue aspartate 247 coordinates Mg(2+).

Belongs to the inositol monophosphatase superfamily. Mg(2+) is required as a cofactor. In terms of tissue distribution, highly expressed in heart, brain, spleen, lung, liver, skeletal muscle, kidney and testis.

It carries out the reaction adenosine 3',5'-bisphosphate + H2O = AMP + phosphate. The enzyme catalyses adenosine 2',5'-bisphosphate + H2O = AMP + phosphate. It catalyses the reaction 3'-phosphoadenylyl sulfate + H2O = adenosine 5'-phosphosulfate + phosphate. The catalysed reaction is 1D-myo-inositol 1,4-bisphosphate + H2O = 1D-myo-inositol 4-phosphate + phosphate. It carries out the reaction 1D-myo-inositol 1,3,4-trisphosphate + H2O = 1D-myo-inositol 3,4-bisphosphate + phosphate. Inhibited by Li(+) and Ca(2+), but not by Na(+). In terms of biological role, phosphatase that converts 3'(2')-phosphoadenosine 5'-phosphate (PAP) to AMP and adenosine 3'-phosphate 5'-phosphosulfate (PAPS) to adenosine 5'-phosphosulfate (APS). Is also able to hydrolyze inositol 1,4-bisphosphate (Ins(1,4)P2) and inositol 1,3,4-trisphosphate (Ins(1,3,4)P3), but is not active on AMP, 3'-AMP, fructose-1,6-bisphosphate, Ins(1)P, Ins(2)P and Ins(1,4,5)P3. Probably prevents the toxic accumulation of PAP, a compound which inhibits a variety of proteins, including PAPS-utilizing enzymes such as sulfotransferases, and RNA processing enzymes. Could also play a role in inositol recycling and phosphoinositide metabolism. The chain is 3'(2'),5'-bisphosphate nucleotidase 1 (Bpnt1) from Rattus norvegicus (Rat).